Reading from the N-terminus, the 360-residue chain is MVDKMNLEEWMRPSIRTLKAYESKSIPDCVRLDANENPLPWPPGMIEQLLGSAIAFNRYPDGGAQELKEALSRYTGVPAEGILTGNGSDELIQLLMTTFGGEKGAVVIHPPTFSMYEAAARVTGTEVLEVPLLLTETSRDFRLDVEGILKAAAQPQVHMIVLCNPNNPTGTLFPREEILRIVAESGKIVIVDEAYGEFSGESVVDQIPYCPNLLVMKTFSKLFAMAALRLGYLLGQPSIIGALNRARQPFNVNSFSQKAGVIALNYGEEYAEQGRILIAELARIAEALTAFASVKVFATRANFLLFQPEDPDRVYQELIGKGFLIRTMGNLPLVGKALRLSTGLPEENERLIKALGEILK.

Lysine 221 carries the post-translational modification N6-(pyridoxal phosphate)lysine.

The protein belongs to the class-II pyridoxal-phosphate-dependent aminotransferase family. Histidinol-phosphate aminotransferase subfamily. As to quaternary structure, homodimer. Requires pyridoxal 5'-phosphate as cofactor.

The catalysed reaction is L-histidinol phosphate + 2-oxoglutarate = 3-(imidazol-4-yl)-2-oxopropyl phosphate + L-glutamate. It functions in the pathway amino-acid biosynthesis; L-histidine biosynthesis; L-histidine from 5-phospho-alpha-D-ribose 1-diphosphate: step 7/9. The polypeptide is Histidinol-phosphate aminotransferase (Desulfitobacterium hafniense (strain DSM 10664 / DCB-2)).